The sequence spans 218 residues: Small ribosomal subunit protein uS3 (218 aa).

In terms of domain architecture, KH type-2 spans 39 to 107; it reads IRDYIKSKLL…QISINIVEIK (69 aa).

This sequence belongs to the universal ribosomal protein uS3 family. As to quaternary structure, part of the 30S ribosomal subunit. Forms a tight complex with proteins S10 and S14.

Binds the lower part of the 30S subunit head. Binds mRNA in the 70S ribosome, positioning it for translation. The polypeptide is Small ribosomal subunit protein uS3 (Desulforudis audaxviator (strain MP104C)).